The sequence spans 712 residues: Dynamin-1-like protein drp-1 (712 aa).

The Dynamin-type G domain maps to 24 to 304; sequence QIQLPQIVVV…LMHHIRNCLP (281 aa). The tract at residues 34–41 is G1 motif; it reads GSQSAGKS. The tract at residues 60–62 is G2 motif; sequence VTR. A G3 motif region spans residues 148–151; that stretch reads DLPG. Residues 217–220 form a G4 motif region; it reads TKLD. The G5 motif stretch occupies residues 247–250; the sequence is VNRS. The segment at 280–502 is interaction with caspase ced-9; sequence SRNGTPYLAK…LAYINTKHPE (223 aa). Residues 523–542 are disordered; sequence GRSRNRHASTGERAVSAHGE. In terms of domain architecture, GED spans 620–711; that stretch reads VAIIERLIRN…IISEVRETQV (92 aa).

The protein belongs to the TRAFAC class dynamin-like GTPase superfamily. Dynamin/Fzo/YdjA family. Interacts (via residues 280-502) with caspase ced-9; the interaction is enhanced by GTP rather than GDP; the interaction is probably direct and may occur at the mitochondrion. In terms of tissue distribution, highly expressed in neurons, in intestinal cells and in the body wall, pharyngeal, and vulval muscles.

It is found in the mitochondrion. It localises to the mitochondrion outer membrane. The protein resides in the cytoplasm. The protein localises to the cytosol. The enzyme catalyses GTP + H2O = GDP + phosphate + H(+). Its activity is regulated as follows. GTPase activity is increased by binding to phospholipid membranes. Functions in mitochondrial division. Functions in peroxisomal division. Mediates membrane fission, perhaps mainly of the mitochondrial outer membrane. Mitochondrial fission may be promoted by recruitment to mitochondrial membranes via the egl-1/ced-9 complex. Involved in the coordination of mitochondrial division with autophagy in response to acute heat stress during larval development. Plays a role in apoptosis by promoting mitochondrial elimination and cell-death execution, acting downstream of caspase ced-3, and perhaps independently of FIS1-related protein fis-2, caspase ced-9 and apoptosis-inducing factor AIFM/wah-1. Role in promoting apoptosis dependent upon cleavage of drp-1 by ced-3. Involved in negatively modulating longevity in concert with the Insulin/IGF-1-like signaling (IIS) mediated pathway. This is Dynamin-1-like protein drp-1 from Caenorhabditis elegans.